The following is a 334-amino-acid chain: N-chimaerin (334 aa).

Residues Met-1–Arg-10 show a composition bias toward polar residues. Residues Met-1–Gln-22 form a disordered region. Residue Thr-67 is modified to Phosphothreonine. The Phorbol-ester/DAG-type zinc finger occupies Val-80 to Cys-130. Residues Cys-143 to Phe-334 form the Rho-GAP domain. Thr-215 carries the post-translational modification Phosphothreonine.

As to quaternary structure, interacts with EPHA4; effector of EPHA4 in axon guidance linking EPHA4 activation to RAC1 regulation. In terms of processing, phosphorylated. Phosphorylation is EPHA4 kinase activity-dependent. In terms of tissue distribution, in neurons in brain regions that are involved in learning and memory processes.

In terms of biological role, GTPase-activating protein for p21-rac and a phorbol ester receptor. Involved in the assembly of neuronal locomotor circuits as a direct effector of EPHA4 in axon guidance. This Rattus norvegicus (Rat) protein is N-chimaerin (Chn1).